Consider the following 513-residue polypeptide: ATP synthase subunit alpha (513 aa).

An ATP-binding site is contributed by 169 to 176; that stretch reads GDRQCGKT.

It belongs to the ATPase alpha/beta chains family. As to quaternary structure, F-type ATPases have 2 components, CF(1) - the catalytic core - and CF(0) - the membrane proton channel. CF(1) has five subunits: alpha(3), beta(3), gamma(1), delta(1), epsilon(1). CF(0) has three main subunits: a(1), b(2) and c(9-12). The alpha and beta chains form an alternating ring which encloses part of the gamma chain. CF(1) is attached to CF(0) by a central stalk formed by the gamma and epsilon chains, while a peripheral stalk is formed by the delta and b chains.

The protein resides in the cell inner membrane. The catalysed reaction is ATP + H2O + 4 H(+)(in) = ADP + phosphate + 5 H(+)(out). Produces ATP from ADP in the presence of a proton gradient across the membrane. The alpha chain is a regulatory subunit. This is ATP synthase subunit alpha from Burkholderia cenocepacia (strain ATCC BAA-245 / DSM 16553 / LMG 16656 / NCTC 13227 / J2315 / CF5610) (Burkholderia cepacia (strain J2315)).